The following is a 279-amino-acid chain: MSIISPQDVKRLREETNAGFGDCKKALSAASGDFELAKKKLREMGIASAEKRLDRDAKEGRVFSYSNNIHAGLLLVSCETDFVALNHNFVNLGNSLIKELVESGRSFPTASQELELKNLAATIKENIQVKKIFITEIQSNEFVKIYLHGEQSKIGVLVKLKVDDFSKTEDKMFQNFAMDLALHVAAFAPIYLGNDDVCPNYIKEQEEIFAKQLEFSGKSESILKGIVAGKIKKHLAEISLLEQSFVKNDKVTVREMLEEISKAISSKIEIVEFKYLRIG.

The segment at 80 to 83 (TDFV) is involved in Mg(2+) ion dislocation from EF-Tu.

It belongs to the EF-Ts family.

The protein localises to the cytoplasm. Its function is as follows. Associates with the EF-Tu.GDP complex and induces the exchange of GDP to GTP. It remains bound to the aminoacyl-tRNA.EF-Tu.GTP complex up to the GTP hydrolysis stage on the ribosome. This is Elongation factor Ts from Borrelia garinii subsp. bavariensis (strain ATCC BAA-2496 / DSM 23469 / PBi) (Borreliella bavariensis).